The primary structure comprises 59 residues: Ferredoxin (59 aa).

The region spanning 2–29 (KVSVDKDACIGCGVCASICPDVFEMDDD) is the 4Fe-4S ferredoxin-type domain. Residues Cys-10, Cys-13, and Cys-16 each coordinate [4Fe-4S] cluster. Cys-20 and Cys-43 are joined by a disulfide. Cys-51 serves as a coordination point for [4Fe-4S] cluster.

[4Fe-4S] cluster is required as a cofactor. The cofactor is [3Fe-4S] cluster.

In terms of biological role, ferredoxins are iron-sulfur proteins that transfer electrons in a wide variety of metabolic reactions. The protein is Ferredoxin of Thermococcus litoralis.